Consider the following 518-residue polypeptide: MATTRFPSLLFYSYIFLLCNGSMAQLFGQSFTPWQSSRQGGLRGCRFDRLQAFEPLRQVRSQAGIIEYFDEQNEQFRCAGVSVIRRVIEPQGLLLPQYHNAPGLVYILQGRGFTGLTFPGCPATFQQQFQPFDQAQFAEGQSQSQNLKDEHQRVHHIKQGDVVALPAGIVHWCYNDGDAPIVAVYVFDVNNNANQLEPRQKEFLLAGNNKREQQFGQNIFSGFSVQLLSEALGISQQVAQKIQSQNDQRGEIIRVSQGLQFLKPFVSQQGPVEHQAYQPIQSQEEQSTQYQVGQSPQYQEGQSTQYQPGQSWDQSFNGLEENFCSLEARQNIENPKRADTYNPRAGRITHLNSKNFPTLNLVQMSATRVNLYQNAILSPYWNINAHSVMHMIQGRARVQVVNNHGQTVFNDILRRGQLLIIPQHYVVLKKAEREGCQYISFKTNPNSMVSQIAGKTSILRALPVDVLANAYRISRQEAQNLKNNRGEEFDAFTPKFTQTGSQSYQDEGESSSTEKASE.

Positions 1–24 (MATTRFPSLLFYSYIFLLCNGSMA) are cleaved as a signal peptide. Cystine bridges form between C45–C78 and C121–C324. The Cupin type-1 1 domain occupies 50–240 (LQAFEPLRQV…ALGISQQVAQ (191 aa)). The interval 280–311 (IQSQEEQSTQYQVGQSPQYQEGQSTQYQPGQS) is disordered. Residues 330–479 (QNIENPKRAD…AYRISRQEAQ (150 aa)) form the Cupin type-1 2 domain. The segment at 482–518 (KNNRGEEFDAFTPKFTQTGSQSYQDEGESSSTEKASE) is disordered. Over residues 495 to 518 (KFTQTGSQSYQDEGESSSTEKASE) the composition is skewed to polar residues.

The protein belongs to the 11S seed storage protein (globulins) family. In terms of assembly, hexamer; each subunit is composed of an acidic and a basic chain derived from a single precursor and linked by a disulfide bond.

Its function is as follows. This is a seed storage protein. The sequence is that of 12S seed storage globulin 2 from Avena sativa (Oat).